The following is a 404-amino-acid chain: MAESVERLQQRVEELERELAQERSRRALGSGDGGGGRARIEKMSSEVVDSNPYSRLMALKRMGIVSDYEKIRTFTVAIVGVGGVGSVTAEMLTRCGIGKLLLFDYDKVELANMNRLFFQPHQAGLSKVQAAEHTLRNINPDVLFEVHNYNITTVENFEHFMNRISNGGLEEGKPVDLVLSCVDNFEARMTINTACNELGQTWMESGVSENAVSGHIQLIIPGESACFACAPPLVVAANIDEKTLKREGVCAASLPTTMGVVAGILVQNVLKFLLNFGTVSFYLGYNAMQDFFPTMSMKPNPQCDDRNCRKQQKEYKKKVAALPKQEVIQEEGEIIHEDNEWGIELVSEISEEELKKSSGPIPDLPEGIIVAYTVPQKQEDSVPEVTVEDSGESLEDLMAKMKNI.

At Ser45 the chain carries Phosphoserine. 5 residues coordinate ATP: Gly83, Asp104, Lys127, Asn150, and Asn184. The Zn(2+) site is built by Cys226 and Cys229. Cys250 functions as the Glycyl thioester intermediate in the catalytic mechanism. Cys303 and Cys308 together coordinate Zn(2+). A UFM1-interacting sequence (UIS) motif is present at residues 334–346 (IIHEDNEWGIELV). A linker region spans residues 347–377 (SEISEEELKKSSGPIPDLPEGIIVAYTVPQK). A phosphoserine mark is found at Ser358 and Ser393. The UFC1-binding sequence (UFC) motif lies at 389 to 404 (DSGESLEDLMAKMKNI).

Belongs to the ubiquitin-activating E1 family. UBA5 subfamily. Homodimer; homodimerization is required for UFM1 activation. Interacts (via UIS motif) with UFM1; binds UFM1 via a trans-binding mechanism in which UFM1 interacts with distinct sites in both subunits of the UBA5 homodimer. Interacts (via C-terminus) with UFC1. Interacts (via UIS motif) with GABARAPL2 and, with lower affinity, with GABARAP and GABARAPL1.

The protein resides in the cytoplasm. It localises to the nucleus. The protein localises to the endoplasmic reticulum membrane. It is found in the golgi apparatus. In terms of biological role, E1-like enzyme which specifically catalyzes the first step in ufmylation. Activates UFM1 by first adenylating its C-terminal glycine residue with ATP, and thereafter linking this residue to the side chain of a cysteine residue in E1, yielding a UFM1-E1 thioester and free AMP. Activates UFM1 via a trans-binding mechanism, in which UFM1 interacts with distinct sites in both subunits of the UBA5 homodimer. Trans-binding also promotes stabilization of the UBA5 homodimer, and enhances ATP-binding. Transfer of UFM1 from UBA5 to the E2-like enzyme UFC1 also takes place using a trans mechanism. Ufmylation plays a key role in various processes, such as ribosome recycling, response to DNA damage, interferon response or reticulophagy (also called ER-phagy). Ufmylation is essential for erythroid differentiation of both megakaryocytes and erythrocytes. The chain is Ubiquitin-like modifier-activating enzyme 5 from Bos taurus (Bovine).